Consider the following 663-residue polypeptide: Putative glucosamine-6-phosphate deaminase-like protein BT_0258 (663 aa).

Residues 1 to 290 form a glucosamine-6-phosphate deaminase-like region; that stretch reads MKTNLSSQIT…NLTRIQRPWL (290 aa). Glu184 is an active-site residue.

The protein in the N-terminal section; belongs to the glucosamine/galactosamine-6-phosphate isomerase family. NagB subfamily.

In Bacteroides thetaiotaomicron (strain ATCC 29148 / DSM 2079 / JCM 5827 / CCUG 10774 / NCTC 10582 / VPI-5482 / E50), this protein is Putative glucosamine-6-phosphate deaminase-like protein BT_0258.